Consider the following 483-residue polypeptide: Cobyric acid synthase (483 aa).

A GATase cobBQ-type domain is found at 244–430 (WLRVIAPVLP…LHGLFDHAEA (187 aa)). Cysteine 325 (nucleophile) is an active-site residue. Histidine 422 is a catalytic residue.

The protein belongs to the CobB/CobQ family. CobQ subfamily.

It participates in cofactor biosynthesis; adenosylcobalamin biosynthesis. Its function is as follows. Catalyzes amidations at positions B, D, E, and G on adenosylcobyrinic A,C-diamide. NH(2) groups are provided by glutamine, and one molecule of ATP is hydrogenolyzed for each amidation. The polypeptide is Cobyric acid synthase (Methylobacillus flagellatus (strain ATCC 51484 / DSM 6875 / VKM B-1610 / KT)).